A 131-amino-acid chain; its full sequence is MSWQAYVDEHLMCEIEGHHLTSAAIVGHDGAVWAQSTAFPQFKTEEMTNIMKDFDEPGFLAPTGLFLGPTKYMVIQGEPGAVIRGKKGSGGITVKKTGQAMVVGIYDEPMTPGQCNMVVERLGDYLLEQGL.

Cysteines 13 and 115 form a disulfide. The Involved in PIP2 interaction motif lies at 81–97 (AVIRGKKGSGGITVKKT). Thr-111 carries the phosphothreonine modification.

It belongs to the profilin family. Occurs in many kinds of cells as a complex with monomeric actin in a 1:1 ratio. In terms of processing, phosphorylated by MAP kinases.

It localises to the cytoplasm. The protein resides in the cytoskeleton. In terms of biological role, binds to actin and affects the structure of the cytoskeleton. At high concentrations, profilin prevents the polymerization of actin, whereas it enhances it at low concentrations. This Zea mays (Maize) protein is Profilin-7.